Consider the following 226-residue polypeptide: 7-cyano-7-deazaguanine synthase (226 aa).

ATP is bound at residue 8 to 18 (ISGGLDSTTCL). Cysteine 188, cysteine 198, cysteine 201, and cysteine 204 together coordinate Zn(2+).

Belongs to the QueC family. The cofactor is Zn(2+).

The enzyme catalyses 7-carboxy-7-deazaguanine + NH4(+) + ATP = 7-cyano-7-deazaguanine + ADP + phosphate + H2O + H(+). The protein operates within purine metabolism; 7-cyano-7-deazaguanine biosynthesis. In terms of biological role, catalyzes the ATP-dependent conversion of 7-carboxy-7-deazaguanine (CDG) to 7-cyano-7-deazaguanine (preQ(0)). The chain is 7-cyano-7-deazaguanine synthase from Coxiella burnetii (strain Dugway 5J108-111).